The sequence spans 201 residues: 3-isopropylmalate dehydratase small subunit (201 aa).

This sequence belongs to the LeuD family. LeuD type 1 subfamily. Heterodimer of LeuC and LeuD.

It catalyses the reaction (2R,3S)-3-isopropylmalate = (2S)-2-isopropylmalate. It participates in amino-acid biosynthesis; L-leucine biosynthesis; L-leucine from 3-methyl-2-oxobutanoate: step 2/4. Functionally, catalyzes the isomerization between 2-isopropylmalate and 3-isopropylmalate, via the formation of 2-isopropylmaleate. The sequence is that of 3-isopropylmalate dehydratase small subunit from Escherichia coli O157:H7.